A 301-amino-acid polypeptide reads, in one-letter code: Ribosomal protein L11 methyltransferase (301 aa).

Positions 146, 167, 189, and 237 each coordinate S-adenosyl-L-methionine.

Belongs to the methyltransferase superfamily. PrmA family.

Its subcellular location is the cytoplasm. It carries out the reaction L-lysyl-[protein] + 3 S-adenosyl-L-methionine = N(6),N(6),N(6)-trimethyl-L-lysyl-[protein] + 3 S-adenosyl-L-homocysteine + 3 H(+). In terms of biological role, methylates ribosomal protein L11. This Prochlorococcus marinus (strain MIT 9303) protein is Ribosomal protein L11 methyltransferase.